The sequence spans 570 residues: AT-rich interactive domain-containing protein 3A (570 aa).

The disordered stretch occupies residues 102–215 (AGVPNSSSGH…LAPQAQSQHH (114 aa)). Residues 120–160 (DIDDEDDEDDDPELDRGMDDEERDMDEDDSMNEGGGDEDLE) show a composition bias toward acidic residues. Ser179 is subject to Phosphoserine. The ARID domain maps to 232-324 (DEKRKEFLDD…YLYPYECEKR (93 aa)). Ser356 bears the Phosphoserine mark. An REKLES domain is found at 429–523 (AALEQLREKL…GVLFARKPAI (95 aa)). The interval 430–473 (ALEQLREKLESGEPPEKKVMLMAEEQQRIMQHALQQNLFAMATQ) is important for nuclear localization. Positions 475–495 (PMNIKLNNRDDRQETALNLST) are homodimerization. The tract at residues 519 to 531 (RKPAIGFMPSSQR) is important for cytoplasmic localization. The tract at residues 528–570 (SSQRVHHQHSSQGKSNSPGLSSHIQPSSSASSSASSHGPATSP) is disordered. 2 positions are modified to phosphoserine: Ser542 and Ser569. Positions 548-570 (SSHIQPSSSASSSASSHGPATSP) are enriched in low complexity.

As to quaternary structure, homodimer.

The protein resides in the nucleus. It localises to the cytoplasm. Its function is as follows. Transcription factor. The polypeptide is AT-rich interactive domain-containing protein 3A (arid3a) (Danio rerio (Zebrafish)).